Reading from the N-terminus, the 208-residue chain is MIGMLTGRVESVETDTALIDVGGVGYETRMPATDLGRLHAGQDACVFTYLNLSQDSVTLYGFLDRDSKRVFLQLIKVSGIGPKVAQSLLGTMTPSQLARAIADNDAAALAKAPGLGRKGAQKIILELKGSVDLNQSDDASAGNAPYQPTVDAGVEQVVEGLVSLGWRQQDAQRAVNEACAENDVPMPLASDDAPRVLRLALARMDRGR.

The segment at Met1 to Leu63 is domain I. A domain II region spans residues Asp64–Gly142. The tract at residues Asn143 to Asp151 is flexible linker. The segment at Asp151–Arg208 is domain III.

Belongs to the RuvA family. Homotetramer. Forms an RuvA(8)-RuvB(12)-Holliday junction (HJ) complex. HJ DNA is sandwiched between 2 RuvA tetramers; dsDNA enters through RuvA and exits via RuvB. An RuvB hexamer assembles on each DNA strand where it exits the tetramer. Each RuvB hexamer is contacted by two RuvA subunits (via domain III) on 2 adjacent RuvB subunits; this complex drives branch migration. In the full resolvosome a probable DNA-RuvA(4)-RuvB(12)-RuvC(2) complex forms which resolves the HJ.

Its subcellular location is the cytoplasm. In terms of biological role, the RuvA-RuvB-RuvC complex processes Holliday junction (HJ) DNA during genetic recombination and DNA repair, while the RuvA-RuvB complex plays an important role in the rescue of blocked DNA replication forks via replication fork reversal (RFR). RuvA specifically binds to HJ cruciform DNA, conferring on it an open structure. The RuvB hexamer acts as an ATP-dependent pump, pulling dsDNA into and through the RuvAB complex. HJ branch migration allows RuvC to scan DNA until it finds its consensus sequence, where it cleaves and resolves the cruciform DNA. This chain is Holliday junction branch migration complex subunit RuvA, found in Bifidobacterium longum subsp. infantis (strain ATCC 15697 / DSM 20088 / JCM 1222 / NCTC 11817 / S12).